Reading from the N-terminus, the 1982-residue chain is Ras guanine nucleotide exchange factor V (1982 aa).

LRR repeat units follow at residues 1 to 26 (MGNINSICLNNNGKYRIDSISCSLEG), 47 to 68 (LTQLLIIRECKLKQIPVNITNL), 69 to 94 (SNLSELILSDNKLSQLPWSLPPPFKP), 105 to 128 (NENLVRLDLSNNRFTEFPSSVFVL), 130 to 151 (NLKQLILCNNQLTNMNVTLCGG), 164 to 187 (ACQLEELKLSNNNFTIFPSIIGDQ), 188 to 210 (LTTLKSLDLSGNTITSLPNSFSN), 212 to 234 (VSLTSLNLKSNKFTCFPPSLCTL), 236 to 257 (KLVHLNLSCNQILVSPSDHTLG), 261 to 284 (LPSLEKLELQHNRFAHFPMDILEI), 286 to 307 (SLRVLKLQDNDIDKIPDKIGNL), 308 to 330 (LNLNELFLSENKITQLPSTIGEL), 331 to 352 (INLRKLYLEYNKIGSLPQEFSK), 354 to 376 (SKLNILILHNNDLKFVPDQLHSL), and 378 to 399 (QLLRLSLDENQLSSSDQKLIKS). At 1-1831 (MGNINSICLN…IANAFYELRN (1831 aa)) the chain is on the extracellular side. Disordered regions lie at residues 414 to 436 (YGSTMNGTGTTSSSGSASTSTHG), 457 to 532 (NQIN…NKKQ), and 615 to 654 (NNSGGGDSMNGSGGNINNSGGSGSGCGTISGSTTKQRRGS). Composition is skewed to low complexity over residues 415–436 (GSTMNGTGTTSSSGSASTSTHG) and 457–495 (NQINNNNNNNNNNNNNNNNNNNSSNNNSGTNSLSSTPNG). The LRR 16 repeat unit spans residues 443 to 466 (DILLSSVTLNNSILNQINNNNNNN). Over residues 506–520 (LTISRSLFRGNSSNL) the composition is skewed to polar residues. Residues 515 to 567 (GNSSNLESEKEDFINKKQQQQQQQQQQQQQQQQQQQQQQQQQQQQQQQQQQLG) adopt a coiled-coil conformation. The LRR 17 repeat unit spans residues 592-615 (EDDIQKMQLGLEALSNLETSIGSN). Residues 616–642 (NSGGGDSMNGSGGNINNSGGSGSGCGT) are compositionally biased toward gly residues. 2 LRR repeats span residues 657–684 (LPPTNAFKLSPNVVSSSYNTLPASVMSG) and 773–796 (HSNLSQSLSINNLAHRLPTSLSSS). Disordered regions lie at residues 756–778 (QSSTNSFLPPQHQHHHHHSNLSQ) and 807–829 (LQFQQQQQHHHHNHNNHQNSNQP). In terms of domain architecture, GBD/FH3 spans 832–1236 (TIVPSFSKFK…QIKYSIDRYG (405 aa)). LRR repeat units follow at residues 979–1003 (LLGILQFNLDNAQLQFDEEKVGYCL), 1075–1100 (SPYVPLVALLRNPIIEMPTKTTVFKI), 1239–1263 (VPAIGSLVLDGSILQSSGSQSRWVD), and 1689–1712 (VQNMPAQSIEDDGLKELTELFVDL). The 123-residue stretch at 1595–1717 (KDRRVSSVTL…LFVDLSTKSY (123 aa)) folds into the N-terminal Ras-GEF domain. One can recognise a Ras-GEF domain in the interval 1747–1974 (DEIEIARQLS…YEMSLSAEPR (228 aa)). The chain crosses the membrane as a helical span at residues 1832-1848 (YHLLMAIISGLNASPVL). Residues 1849-1982 (RLKYTKGKLS…PRNAERYDIQ (134 aa)) are Cytoplasmic-facing. LRR repeat units follow at residues 1865 to 1888 (LDTLEELMSTQSSMKNYRADLAAA) and 1917 to 1941 (RINFKKLEMYKKTIATLQNFSLFPY).

It localises to the membrane. Functionally, promotes the exchange of Ras-bound GDP by GTP. This chain is Ras guanine nucleotide exchange factor V (gefV), found in Dictyostelium discoideum (Social amoeba).